The following is a 503-amino-acid chain: Hemogen (503 aa).

2 stretches are compositionally biased toward basic residues: residues 1-10 and 61-79; these read MDMGKGRPRL and KKRKYQRTGKGNKRGRKRQ. The tract at residues 1–129 is disordered; it reads MDMGKGRPRL…PLVPSPTKAV (129 aa). The segment at 7–87 is necessary for nuclear localization; sequence RPRLKLPQMP…RQGNVEQKAE (81 aa). 11 positions are modified to phosphoserine: Ser-90, Ser-103, Ser-124, Ser-153, Ser-158, Ser-171, Ser-213, Ser-223, Ser-228, Ser-241, and Ser-269. Thr-286 bears the Phosphothreonine mark. The interval 381–503 is disordered; the sequence is QKTIQESPEP…ENGIYSSALF (123 aa). Residues 385 to 396 show a composition bias toward low complexity; the sequence is QESPEPEQYSPE. 2 positions are modified to phosphoserine: Ser-387 and Ser-394. Residues 426-436 are compositionally biased toward basic and acidic residues; it reads CQDREEPKHSL.

Expressed in hematopoietic precursor cells. Highly expressed in bone marrow, the red pulp of the spleen and round spermatids. Weakly expressed in peripheral blood cells.

It localises to the nucleus. Its function is as follows. Regulates the proliferation and differentiation of hematopoietic cells. Overexpression block the TPA-induced megakaryocytic differentiation in the K562 cell model. May also prevent cell apoptosis through the activation of the nuclear factor-kappa B (NF-kB). The sequence is that of Hemogen (Hemgn) from Mus musculus (Mouse).